The chain runs to 424 residues: Virion nicking-joining enzyme (424 aa).

The protein belongs to the orthopoxvirus OPG042 family.

It is found in the virion. DNA nicking enzyme that cleaves extruded cruciform DNA at its tip. Probably nicks viral hairpins. The sequence is that of Virion nicking-joining enzyme (OPG042) from Cynomys gunnisoni (Gunnison's prairie dog).